We begin with the raw amino-acid sequence, 221 residues long: Thymidylate kinase (221 aa).

10 to 17 (GIDGAGKT) contributes to the ATP binding site.

The protein belongs to the thymidylate kinase family.

The catalysed reaction is dTMP + ATP = dTDP + ADP. Phosphorylation of dTMP to form dTDP in both de novo and salvage pathways of dTTP synthesis. The protein is Thymidylate kinase of Desulforudis audaxviator (strain MP104C).